A 371-amino-acid polypeptide reads, in one-letter code: Proton-coupled zinc antiporter SLC30A2 (371 aa).

The Cytoplasmic segment spans residues 1-69; sequence MQTMDKQNLL…DPEKQRARRK (69 aa). Positions 47 to 50 match the Mitochondrial localization signal motif; the sequence is HYCH. Cys-49 lines the Zn(2+) pocket. The helical transmembrane segment at 70-90 threads the bilayer; it reads LYVASAICLVFMIGEIIGGYL. Residues 91 to 99 lie on the Lumenal side of the membrane; it reads AQSLAIMTD. Residues 100 to 120 form a helical membrane-spanning segment; the sequence is AAHLLTDFASMLISLFALWVS. His-102 and Asp-106 together coordinate Zn(2+). Over 121–136 the chain is Cytoplasmic; sequence SRPATKTMNFGWHRAE. The helical transmembrane segment at 137–157 threads the bilayer; sequence ILGALLSVLSIWVVTGVLVYL. The Lumenal portion of the chain corresponds to 158–172; the sequence is AVQRLISGDYEIKGD. A helical transmembrane segment spans residues 173–193; sequence TMLITSGCAVAVNLIMGLALH. The Cytoplasmic segment spans residues 194 to 219; the sequence is QSGHGHSHGNSRDDSSQQQNPSVRAA. A helical membrane pass occupies residues 220–240; it reads FIHVIGDLLQSVGVLVAAYII. Zn(2+) contacts are provided by His-222 and Asp-226. Topologically, residues 241 to 248 are lumenal; the sequence is YFKPEYKY. Residues 249-269 form a helical membrane-spanning segment; it reads VDPICTFLFSILVLGTTLTIL. Residues 270–303 lie on the Cytoplasmic side of the membrane; that stretch reads RDVILVLMEGTPKGVDFTTVKNLLLSVDGVEALH. The Lysosomal targeting motif motif lies at 293–294; sequence LL. Ser-295 carries the post-translational modification Phosphoserine. 3 residues coordinate Zn(2+): His-303, His-320, and Glu-354. A helical membrane pass occupies residues 304–324; that stretch reads SLHIWALTVAQPVLSVHIAIA. At 325–371 the chain is on the lumenal side; sequence QNADAQAVLKVARDRLQGKFNFHTMTIQIEKYSEDMKNCQACQGPLE.

This sequence belongs to the cation diffusion facilitator (CDF) transporter (TC 2.A.4) family. SLC30A subfamily. Homodimer. Interacts (via lysosomal targeting motif) with AP3D1; in AP-3-mediated transport to lysosomes. Interacts with TMEM163. Post-translationally, phosphorylated at Ser-295. Phosphorylation at Ser-295 prevents localization to lysosomes. Dephosphorylation of Ser-295 which triggers localization to lysosomes, accumulation of zinc into lysosomes and lysosomal-mediated cell death is induced by TNF-alpha.

Its subcellular location is the cytoplasmic vesicle. The protein resides in the secretory vesicle membrane. The protein localises to the zymogen granule membrane. It is found in the endosome membrane. It localises to the lysosome membrane. Its subcellular location is the mitochondrion inner membrane. The protein resides in the cell membrane. It catalyses the reaction Zn(2+)(in) + 2 H(+)(out) = Zn(2+)(out) + 2 H(+)(in). Electroneutral proton-coupled antiporter concentrating zinc ions into a variety of intracellular organelles including endosomes, zymogen granules and mitochondria. Thereby, plays a crucial role in cellular zinc homeostasis to confer upon cells protection against its potential cytotoxicity. Regulates the zinc concentration of milk, through the transport of zinc ions into secretory vesicles of mammary cells. By concentrating zinc ions into lysosomes participates to lysosomal-mediated cell death during early mammary gland involution. Functionally, electroneutral proton-coupled antiporter mediating the efflux of zinc ions through the plasma membrane. The protein is Proton-coupled zinc antiporter SLC30A2 of Mus musculus (Mouse).